The following is a 525-amino-acid chain: GMP synthase [glutamine-hydrolyzing] (525 aa).

The Glutamine amidotransferase type-1 domain maps to 9-207; sequence RILILDFGSQ…VRDICQCEAL (199 aa). The active-site Nucleophile is the Cys-86. Catalysis depends on residues His-181 and Glu-183. In terms of domain architecture, GMPS ATP-PPase spans 208 to 400; the sequence is WTPAKIIDDA…LGLPYDMLYR (193 aa). Residue 235–241 participates in ATP binding; sequence SGGVDSS.

Homodimer.

It carries out the reaction XMP + L-glutamine + ATP + H2O = GMP + L-glutamate + AMP + diphosphate + 2 H(+). It participates in purine metabolism; GMP biosynthesis; GMP from XMP (L-Gln route): step 1/1. In terms of biological role, catalyzes the synthesis of GMP from XMP. The sequence is that of GMP synthase [glutamine-hydrolyzing] from Shigella flexneri.